Here is a 104-residue protein sequence, read N- to C-terminus: Protein S100-A14 (104 aa).

The EF-hand domain maps to Lys27 to Asn61.

It belongs to the S-100 family. As to quaternary structure, homodimer. Interacts with AGER.

The protein localises to the cytoplasm. Its function is as follows. Modulates P53/TP53 protein levels, and thereby plays a role in the regulation of cell survival and apoptosis. Depending on the context, it can promote cell proliferation or apoptosis. Plays a role in the regulation of cell migration by modulating the levels of MMP2, a matrix protease that is under transcriptional control of P53/TP53. Does not bind calcium. This chain is Protein S100-A14 (S100A14), found in Bos taurus (Bovine).